The chain runs to 347 residues: MAENIIEIKNVYKEFNGVPILKDINLNIKKNEFLTLLGPSGCGKTTTLRILGGFEDATNGEVIFEGKKINDVPPYKRQINTVFQKYALFPHMSIFENIAFGLNIKKVPKDQIKTRVKRMLKLVDLEGYENRSIDSLSGGQQQRIAIARALVNEPKVLLLDEPLGALDLKLRKEMQIELKKMQKQLGITFIYVTHDQDEALTMSDKIVVMDKGEIQQMGTPEDIYNEPKNAFVAKFIGASNIVDGIMIEDFLVDFAGRKFECVDKGFEPNEDIQVVVRPEDIKIVDKDKGMLEGVVESETFKGVHYEMIVKENDREWLVHSTLKSEVGTVVGMNIFPEDIHIMKKVSD.

Positions 6–236 constitute an ABC transporter domain; that stretch reads IEIKNVYKEF…PKNAFVAKFI (231 aa). Position 38–45 (38–45) interacts with ATP; it reads GPSGCGKT.

This sequence belongs to the ABC transporter superfamily. Spermidine/putrescine importer (TC 3.A.1.11.1) family. In terms of assembly, the complex is composed of two ATP-binding proteins (PotA), two transmembrane proteins (PotB and PotC) and a solute-binding protein (PotD).

It localises to the cell membrane. The enzyme catalyses ATP + H2O + polyamine-[polyamine-binding protein]Side 1 = ADP + phosphate + polyamineSide 2 + [polyamine-binding protein]Side 1.. Its function is as follows. Part of the ABC transporter complex PotABCD involved in spermidine/putrescine import. Responsible for energy coupling to the transport system. The sequence is that of Spermidine/putrescine import ATP-binding protein PotA from Clostridium novyi (strain NT).